The following is a 206-amino-acid chain: Large ribosomal subunit protein uL4 (206 aa).

The interval 44-87 (KRQGTQKAKTRSEVRGGGRKPWRQKGTGHARQGSTRSPQWTGGG) is disordered. Over residues 60 to 71 (GGRKPWRQKGTG) the composition is skewed to basic residues.

The protein belongs to the universal ribosomal protein uL4 family. As to quaternary structure, part of the 50S ribosomal subunit.

Its function is as follows. One of the primary rRNA binding proteins, this protein initially binds near the 5'-end of the 23S rRNA. It is important during the early stages of 50S assembly. It makes multiple contacts with different domains of the 23S rRNA in the assembled 50S subunit and ribosome. Functionally, forms part of the polypeptide exit tunnel. The sequence is that of Large ribosomal subunit protein uL4 from Agathobacter rectalis (strain ATCC 33656 / DSM 3377 / JCM 17463 / KCTC 5835 / VPI 0990) (Eubacterium rectale).